A 301-amino-acid polypeptide reads, in one-letter code: Small ribosomal subunit protein uS2 (301 aa).

Belongs to the universal ribosomal protein uS2 family. As to quaternary structure, component of the small ribosomal subunit. Mature ribosomes consist of a small (40S) and a large (60S) subunit. The 40S subunit contains about 33 different proteins and 1 molecule of RNA (18S). The 60S subunit contains about 49 different proteins and 3 molecules of RNA (25S, 5.8S and 5S). Interacts with RPS21.

The protein localises to the cytoplasm. Functionally, required for the assembly and/or stability of the 40S ribosomal subunit. Required for the processing of the 20S rRNA-precursor to mature 18S rRNA in a late step of the maturation of 40S ribosomal subunits. The sequence is that of Small ribosomal subunit protein uS2 from Ajellomyces dermatitidis (strain ER-3 / ATCC MYA-2586) (Blastomyces dermatitidis).